The sequence spans 70 residues: Beta-insect excitatory toxin LqqIT1 (70 aa).

The LCN-type CS-alpha/beta domain maps to Lys-2 to Asp-65. Disulfide bonds link Cys-16–Cys-37, Cys-22–Cys-42, Cys-26–Cys-44, and Cys-38–Cys-64.

Belongs to the long (4 C-C) scorpion toxin superfamily. Sodium channel inhibitor family. Beta subfamily. Expressed by the venom gland.

The protein localises to the secreted. Functionally, excitatory insect beta-toxins induce a spastic paralysis. They bind voltage-independently at site-4 of sodium channels (Nav) and shift the voltage of activation toward more negative potentials thereby affecting sodium channel activation and promoting spontaneous and repetitive firing. In vivo, this toxin induces a fast excitatory contraction paralysis on fly larvae. It is active only on insects. In Leiurus quinquestriatus quinquestriatus (Egyptian scorpion), this protein is Beta-insect excitatory toxin LqqIT1.